Consider the following 78-residue polypeptide: Antitoxin VapB1 (78 aa).

Positions 3–44 (TKVFQSGNSQAVRIPMDFRFDVDTVEIFRKENGDVVLRPVSK) constitute a SpoVT-AbrB domain.

The protein belongs to the VapB family. Forms multimers, as well forming as a complex with VapC1.

Functionally, antitoxin component of a type II toxin-antitoxin (TA) system. Upon expression in E.coli neutralizes the effect of toxin VapC1. In vitro inhibits the RNase activity of VapC1. In Haemophilus influenzae (strain R2866), this protein is Antitoxin VapB1 (vapB1).